Consider the following 195-residue polypeptide: Probable GTP-binding protein EngB (195 aa).

One can recognise an EngB-type G domain in the interval 24–195 (ELPEIALAGR…EAWDAILEKL (172 aa)). GTP-binding positions include 32–39 (GRSNVGKS), 59–63 (GKTQL), 77–80 (DVPG), 144–147 (TKAD), and 176–178 (FSS). Positions 39 and 61 each coordinate Mg(2+).

Belongs to the TRAFAC class TrmE-Era-EngA-EngB-Septin-like GTPase superfamily. EngB GTPase family. Mg(2+) serves as cofactor.

Functionally, necessary for normal cell division and for the maintenance of normal septation. The protein is Probable GTP-binding protein EngB of Streptococcus pneumoniae serotype 4 (strain ATCC BAA-334 / TIGR4).